Consider the following 308-residue polypeptide: 4-diphosphocytidyl-2-C-methyl-D-erythritol kinase (308 aa).

Lysine 23 is a catalytic residue. 108-118 serves as a coordination point for ATP; sequence PVAAGIGGGSA. Aspartate 150 is an active-site residue.

Belongs to the GHMP kinase family. IspE subfamily.

It catalyses the reaction 4-CDP-2-C-methyl-D-erythritol + ATP = 4-CDP-2-C-methyl-D-erythritol 2-phosphate + ADP + H(+). It participates in isoprenoid biosynthesis; isopentenyl diphosphate biosynthesis via DXP pathway; isopentenyl diphosphate from 1-deoxy-D-xylulose 5-phosphate: step 3/6. In terms of biological role, catalyzes the phosphorylation of the position 2 hydroxy group of 4-diphosphocytidyl-2C-methyl-D-erythritol. The protein is 4-diphosphocytidyl-2-C-methyl-D-erythritol kinase of Nitrobacter winogradskyi (strain ATCC 25391 / DSM 10237 / CIP 104748 / NCIMB 11846 / Nb-255).